A 245-amino-acid polypeptide reads, in one-letter code: 1-(5-phosphoribosyl)-5-[(5-phosphoribosylamino)methylideneamino] imidazole-4-carboxamide isomerase (245 aa).

Residue aspartate 7 is the Proton acceptor of the active site. The active-site Proton donor is the aspartate 129.

It belongs to the HisA/HisF family.

Its subcellular location is the cytoplasm. It carries out the reaction 1-(5-phospho-beta-D-ribosyl)-5-[(5-phospho-beta-D-ribosylamino)methylideneamino]imidazole-4-carboxamide = 5-[(5-phospho-1-deoxy-D-ribulos-1-ylimino)methylamino]-1-(5-phospho-beta-D-ribosyl)imidazole-4-carboxamide. The protein operates within amino-acid biosynthesis; L-histidine biosynthesis; L-histidine from 5-phospho-alpha-D-ribose 1-diphosphate: step 4/9. This is 1-(5-phosphoribosyl)-5-[(5-phosphoribosylamino)methylideneamino] imidazole-4-carboxamide isomerase from Escherichia coli O17:K52:H18 (strain UMN026 / ExPEC).